A 53-amino-acid polypeptide reads, in one-letter code: Rubredoxin (53 aa).

Positions 1–52 constitute a Rubredoxin-like domain; the sequence is MAKWRCKICGYIYDEDEGDPDNGISPGTKFEDLPDDWVCPLCGAPKSEFERI. Fe cation is bound by residues Cys-6, Cys-9, Cys-39, and Cys-42.

The protein belongs to the rubredoxin family. It depends on Fe(3+) as a cofactor.

Rubredoxin is a small nonheme, iron protein lacking acid-labile sulfide. Its single Fe, chelated to 4 Cys, functions as an electron acceptor and may also stabilize the conformation of the molecule. This chain is Rubredoxin (rub), found in Pyrococcus abyssi (strain GE5 / Orsay).